Consider the following 34-residue polypeptide: Cytochrome c oxidase subunit 6B (34 aa).

This sequence belongs to the cytochrome c oxidase subunit 6B family. As to quaternary structure, component of the cytochrome c oxidase (complex IV, CIV), a multisubunit enzyme composed of 14 subunits. The complex is composed of a catalytic core of 3 subunits MT-CO1, MT-CO2 and MT-CO3, encoded in the mitochondrial DNA, and 11 supernumerary subunits COX4I, COX5A, COX5B, COX6A, COX6B, COX6C, COX7A, COX7B, COX7C, COX8 and NDUFA4, which are encoded in the nuclear genome. The complex exists as a monomer or a dimer and forms supercomplexes (SCs) in the inner mitochondrial membrane with NADH-ubiquinone oxidoreductase (complex I, CI) and ubiquinol-cytochrome c oxidoreductase (cytochrome b-c1 complex, complex III, CIII), resulting in different assemblies (supercomplex SCI(1)III(2)IV(1) and megacomplex MCI(2)III(2)IV(2)). Post-translationally, the N-terminus is blocked.

The protein localises to the mitochondrion inner membrane. It participates in energy metabolism; oxidative phosphorylation. Its function is as follows. Component of the cytochrome c oxidase, the last enzyme in the mitochondrial electron transport chain which drives oxidative phosphorylation. The respiratory chain contains 3 multisubunit complexes succinate dehydrogenase (complex II, CII), ubiquinol-cytochrome c oxidoreductase (cytochrome b-c1 complex, complex III, CIII) and cytochrome c oxidase (complex IV, CIV), that cooperate to transfer electrons derived from NADH and succinate to molecular oxygen, creating an electrochemical gradient over the inner membrane that drives transmembrane transport and the ATP synthase. Cytochrome c oxidase is the component of the respiratory chain that catalyzes the reduction of oxygen to water. Electrons originating from reduced cytochrome c in the intermembrane space (IMS) are transferred via the dinuclear copper A center (CU(A)) of subunit 2 and heme A of subunit 1 to the active site in subunit 1, a binuclear center (BNC) formed by heme A3 and copper B (CU(B)). The BNC reduces molecular oxygen to 2 water molecules using 4 electrons from cytochrome c in the IMS and 4 protons from the mitochondrial matrix. The sequence is that of Cytochrome c oxidase subunit 6B from Thunnus obesus (Bigeye tuna).